The following is a 246-amino-acid chain: Chemokine-binding protein (246 aa).

The segment covering Ser-108–Pro-125 has biased composition (polar residues). A disordered region spans residues Ser-108–Pro-132.

Belongs to the orthopoxvirus OPG001 family.

The protein localises to the secreted. Functionally, inhibits host immune defense by binding to host chemokines. Binds host CC chemokines (beta chemokines) such as RANTES with high affinity, but not CXC or C chemokines (alpha and gamma chemokines). This chain is Chemokine-binding protein (OPG001), found in Monkeypox virus.